Consider the following 736-residue polypeptide: Probable potassium transport system protein Kup 2 (736 aa).

12 helical membrane-spanning segments follow: residues methionine 1 to alanine 21, methionine 42 to alanine 62, glycine 84 to leucine 104, leucine 126 to phenylalanine 146, isoleucine 156 to valine 176, alanine 204 to tyrosine 224, tryptophan 239 to alanine 259, alanine 287 to phenylalanine 307, leucine 334 to phenylalanine 354, tyrosine 364 to tryptophan 384, valine 390 to serine 410, and phenylalanine 414 to threonine 434. Disordered regions lie at residues threonine 649 to serine 678 and alanine 693 to arginine 736. 2 stretches are compositionally biased toward low complexity: residues proline 660–threonine 677 and glutamate 700–glutamate 709. The span at glutamine 710–asparagine 721 shows a compositional bias: basic and acidic residues.

This sequence belongs to the HAK/KUP transporter (TC 2.A.72) family.

The protein localises to the cell membrane. It catalyses the reaction K(+)(in) + H(+)(in) = K(+)(out) + H(+)(out). Functionally, transport of potassium into the cell. Likely operates as a K(+):H(+) symporter. This Bifidobacterium longum (strain NCC 2705) protein is Probable potassium transport system protein Kup 2.